The chain runs to 144 residues: MKFLVLAALLTAGTAASGVSPTALWQFRGMIQCTIPGSSPYLEFNGYGCYCGLGGSGTPVDELDRCCQTHDQCYTQAKKLSSCSFLVDNPYTNSYSYSCSGTTVTCSSKNKECEAFICDCDRKAAICFSKRPYNKEYKPISKYC.

Positions 1-15 are cleaved as a signal peptide; it reads MKFLVLAALLTAGTA. The propeptide at 16–22 is activation peptide; sequence ASGVSPT. Cystine bridges form between Cys-33–Cys-99, Cys-49–Cys-144, Cys-51–Cys-67, Cys-66–Cys-127, Cys-73–Cys-120, Cys-83–Cys-113, and Cys-106–Cys-118. Residues Tyr-50, Gly-52, and Gly-54 each contribute to the Ca(2+) site. His-70 is an active-site residue. Position 71 (Asp-71) interacts with Ca(2+). The active site involves Asp-121.

It belongs to the phospholipase A2 family. As to quaternary structure, monomer or homodimer. Ca(2+) serves as cofactor. Activated by trypsin cleavage in the duodenum. Can also be activated by thrombin or autocatalytically.

The protein resides in the secreted. It carries out the reaction a 1,2-diacyl-sn-glycero-3-phosphocholine + H2O = a 1-acyl-sn-glycero-3-phosphocholine + a fatty acid + H(+). The enzyme catalyses 1,2-ditetradecanoyl-sn-glycero-3-phosphocholine + H2O = 1-tetradecanoyl-sn-glycero-3-phosphocholine + tetradecanoate + H(+). The catalysed reaction is 1,2-dihexadecanoyl-sn-glycero-3-phosphocholine + H2O = 1-hexadecanoyl-sn-glycero-3-phosphocholine + hexadecanoate + H(+). It catalyses the reaction 1-hexadecanoyl-2-(9Z-octadecenoyl)-sn-glycero-3-phosphocholine + H2O = 1-hexadecanoyl-sn-glycero-3-phosphocholine + (9Z)-octadecenoate + H(+). It carries out the reaction 1-hexadecanoyl-2-(5Z,8Z,11Z,14Z-eicosatetraenoyl)-sn-glycero-3-phosphocholine + H2O = 1-hexadecanoyl-sn-glycero-3-phosphocholine + (5Z,8Z,11Z,14Z)-eicosatetraenoate + H(+). The enzyme catalyses 1-hexadecanoyl-2-(9Z-octadecenoyl)-sn-glycero-3-phospho-(1'-sn-glycerol) + H2O = 1-hexadecanoyl-sn-glycero-3-phospho-(1'-sn-glycerol) + (9Z)-octadecenoate + H(+). The catalysed reaction is N-hexadecanoyl-1,2-di-(9Z-octadecenoyl)-sn-glycero-3-phosphoethanolamine + H2O = N-hexadecanoyl-1-(9Z-octadecenoyl)-sn-glycero-3-phosphoethanolamine + (9Z)-octadecenoate + H(+). It catalyses the reaction 1-hexadecanoyl-2-(9Z,12Z-octadecadienoyl)-sn-glycero-3-phosphoethanolamine + H2O = 1-hexadecanoyl-sn-glycero-3-phosphoethanolamine + (9Z,12Z)-octadecadienoate + H(+). It carries out the reaction N,1-dihexadecanoyl-2-(9Z,12Z-octadecadienoyl)-sn-glycero-3-phosphoethanolamine + H2O = N,1-dihexadecanoyl-sn-glycero-3-phosphoethanolamine + (9Z,12Z)-octadecadienoate + H(+). Its function is as follows. Secretory calcium-dependent phospholipase A2 that primarily targets dietary phospholipids in the intestinal tract. Hydrolyzes the ester bond of the fatty acyl group attached at sn-2 position of phospholipids (phospholipase A2 activity) with preference for phosphatidylethanolamines and phosphatidylglycerols over phosphatidylcholines. May play a role in the biosynthesis of N-acyl ethanolamines that regulate energy metabolism and inflammation in the intestinal tract. Hydrolyzes N-acyl phosphatidylethanolamines to N-acyl lysophosphatidylethanolamines, which are further cleaved by a lysophospholipase D to release N-acyl ethanolamines. May act in an autocrine and paracrine manner. Has anti-helminth activity in a process regulated by gut microbiota. Upon helminth infection of intestinal epithelia, directly affects phosphatidylethanolamine contents in the membrane of helminth larvae, likely controlling an array of phospholipid-mediated cellular processes such as membrane fusion and cell division while providing for better immune recognition, ultimately reducing larvae integrity and infectivity. The polypeptide is Phospholipase A2 (PLA2G1B) (Oryctolagus cuniculus (Rabbit)).